Reading from the N-terminus, the 212-residue chain is COP9 signalosome complex subunit 8 (212 aa).

One can recognise a PCI domain in the interval 26 to 193 (TSLSAYEEQA…KPVVTAPPKD (168 aa)).

This sequence belongs to the CSN8 family. In terms of assembly, component of the COP9 signalosome (CSN) complex.

It localises to the cytoplasm. Its subcellular location is the nucleus. Component of the COP9 signalosome (CSN) complex that acts as an regulator of the ubiquitin (Ubl) conjugation pathway by mediating the deneddylation of the cullin subunit of SCF-type E3 ubiquitin-protein ligase complexes. The CSN complex seems to link protein degradation to sexual development. The polypeptide is COP9 signalosome complex subunit 8 (csnH) (Emericella nidulans (strain FGSC A4 / ATCC 38163 / CBS 112.46 / NRRL 194 / M139) (Aspergillus nidulans)).